The chain runs to 191 residues: 3-isopropylmalate dehydratase small subunit (191 aa).

Belongs to the LeuD family. LeuD type 1 subfamily. As to quaternary structure, heterodimer of LeuC and LeuD.

It catalyses the reaction (2R,3S)-3-isopropylmalate = (2S)-2-isopropylmalate. The protein operates within amino-acid biosynthesis; L-leucine biosynthesis; L-leucine from 3-methyl-2-oxobutanoate: step 2/4. In terms of biological role, catalyzes the isomerization between 2-isopropylmalate and 3-isopropylmalate, via the formation of 2-isopropylmaleate. The protein is 3-isopropylmalate dehydratase small subunit of Staphylococcus saprophyticus subsp. saprophyticus (strain ATCC 15305 / DSM 20229 / NCIMB 8711 / NCTC 7292 / S-41).